The sequence spans 297 residues: Phosphatidylserine decarboxylase proenzyme (297 aa).

Catalysis depends on charge relay system; for autoendoproteolytic cleavage activity residues D100, H157, and S263. S263 (schiff-base intermediate with substrate; via pyruvic acid; for decarboxylase activity) is an active-site residue. S263 is modified (pyruvic acid (Ser); by autocatalysis).

This sequence belongs to the phosphatidylserine decarboxylase family. PSD-B subfamily. Prokaryotic type I sub-subfamily. As to quaternary structure, heterodimer of a large membrane-associated beta subunit and a small pyruvoyl-containing alpha subunit. The cofactor is pyruvate. Post-translationally, is synthesized initially as an inactive proenzyme. Formation of the active enzyme involves a self-maturation process in which the active site pyruvoyl group is generated from an internal serine residue via an autocatalytic post-translational modification. Two non-identical subunits are generated from the proenzyme in this reaction, and the pyruvate is formed at the N-terminus of the alpha chain, which is derived from the carboxyl end of the proenzyme. The autoendoproteolytic cleavage occurs by a canonical serine protease mechanism, in which the side chain hydroxyl group of the serine supplies its oxygen atom to form the C-terminus of the beta chain, while the remainder of the serine residue undergoes an oxidative deamination to produce ammonia and the pyruvoyl prosthetic group on the alpha chain. During this reaction, the Ser that is part of the protease active site of the proenzyme becomes the pyruvoyl prosthetic group, which constitutes an essential element of the active site of the mature decarboxylase.

The protein resides in the cell membrane. It catalyses the reaction a 1,2-diacyl-sn-glycero-3-phospho-L-serine + H(+) = a 1,2-diacyl-sn-glycero-3-phosphoethanolamine + CO2. It functions in the pathway phospholipid metabolism; phosphatidylethanolamine biosynthesis; phosphatidylethanolamine from CDP-diacylglycerol: step 2/2. Functionally, catalyzes the formation of phosphatidylethanolamine (PtdEtn) from phosphatidylserine (PtdSer). The protein is Phosphatidylserine decarboxylase proenzyme of Glaesserella parasuis serovar 5 (strain SH0165) (Haemophilus parasuis).